We begin with the raw amino-acid sequence, 376 residues long: tRNA-specific 2-thiouridylase MnmA (376 aa).

Residues 14 to 21 and Met40 contribute to the ATP site; that span reads GMSGGVDS. Positions 100–102 are interaction with target base in tRNA; it reads NPD. Cys105 functions as the Nucleophile in the catalytic mechanism. Cys105 and Cys202 are disulfide-bonded. Residue Gly129 participates in ATP binding. Positions 152-154 are interaction with tRNA; it reads KDQ. Catalysis depends on Cys202, which acts as the Cysteine persulfide intermediate. An interaction with tRNA region spans residues 315 to 316; sequence RY.

This sequence belongs to the MnmA/TRMU family.

It is found in the cytoplasm. The catalysed reaction is S-sulfanyl-L-cysteinyl-[protein] + uridine(34) in tRNA + AH2 + ATP = 2-thiouridine(34) in tRNA + L-cysteinyl-[protein] + A + AMP + diphosphate + H(+). Catalyzes the 2-thiolation of uridine at the wobble position (U34) of tRNA, leading to the formation of s(2)U34. This Lactococcus lactis subsp. lactis (strain IL1403) (Streptococcus lactis) protein is tRNA-specific 2-thiouridylase MnmA.